The sequence spans 295 residues: Sulfotransferase 1E1 (295 aa).

Position 48–53 (48–53 (KSGTTW)) interacts with 3'-phosphoadenylyl sulfate. Position 106–108 (106–108 (KTH)) interacts with substrate. Residue His108 is the Proton acceptor of the active site. 3'-phosphoadenylyl sulfate is bound by residues Arg130 and Ser138. A Phosphoserine modification is found at Ser156. 3'-phosphoadenylyl sulfate contacts are provided by residues Tyr193, 227–232 (TSFQEM), and 257–259 (RKG).

It belongs to the sulfotransferase 1 family. Homodimer. As to expression, testis and at very low level in the placenta.

It localises to the cytoplasm. Its subcellular location is the cytosol. The enzyme catalyses estrone + 3'-phosphoadenylyl sulfate = estrone 3-sulfate + adenosine 3',5'-bisphosphate + H(+). The catalysed reaction is 17beta-estradiol + 3'-phosphoadenylyl sulfate = 17beta-estradiol 3-sulfate + adenosine 3',5'-bisphosphate + H(+). It catalyses the reaction (24S)-hydroxycholesterol + 3'-phosphoadenylyl sulfate = (24S)-hydroxycholesterol 3-sulfate + adenosine 3',5'-bisphosphate + H(+). It carries out the reaction 3beta-hydroxyandrost-5-en-17-one + 3'-phosphoadenylyl sulfate = dehydroepiandrosterone 3-sulfate + adenosine 3',5'-bisphosphate + H(+). The enzyme catalyses 4-ethylphenol + 3'-phosphoadenylyl sulfate = 4-ethylphenyl sulfate + adenosine 3',5'-bisphosphate + H(+). Its activity is regulated as follows. Inhibited by estradiol. In terms of biological role, sulfotransferase that utilizes 3'-phospho-5'-adenylyl sulfate (PAPS) as sulfonate donor to catalyze the sulfate conjugation of estradiol and estrone. Is a key enzyme in estrogen homeostasis, the sulfation of estrogens leads to their inactivation. Also sulfates dehydroepiandrosterone, pregnenolone, (24S)-hydroxycholesterol and xenobiotic compounds like ethinylestradiol, equalenin, diethyl stilbesterol and 1-naphthol at significantly lower efficiency. Does not sulfonate cortisol, testosterone and dopamine. May play a role in gut microbiota-host metabolic interaction. O-sulfonates 4-ethylphenol (4-EP), a dietary tyrosine-derived metabolite produced by gut bacteria. The product 4-EPS crosses the blood-brain barrier and may negatively regulate oligodendrocyte maturation and myelination, affecting the functional connectivity of different brain regions associated with the limbic system. The sequence is that of Sulfotransferase 1E1 (Sult1e1) from Mus musculus (Mouse).